Consider the following 611-residue polypeptide: Chaperone protein DnaK (611 aa).

A Phosphothreonine; by autocatalysis modification is found at Thr-173. A compositionally biased stretch (low complexity) spans 579-592 (AAGQAEGAQGAQDA). Positions 579 to 598 (AAGQAEGAQGAQDAGAKKDN) are disordered.

The protein belongs to the heat shock protein 70 family.

Acts as a chaperone. The sequence is that of Chaperone protein DnaK from Bacillus cereus (strain ATCC 10987 / NRS 248).